Reading from the N-terminus, the 241-residue chain is Triosephosphate isomerase (241 aa).

9-11 (NWK) lines the substrate pocket. The Electrophile role is filled by His96. Catalysis depends on Glu165, which acts as the Proton acceptor. Residues Gly171, Ser204, and 225 to 226 (GG) each bind substrate.

Belongs to the triosephosphate isomerase family. Homodimer.

The protein resides in the cytoplasm. The catalysed reaction is D-glyceraldehyde 3-phosphate = dihydroxyacetone phosphate. The protein operates within carbohydrate biosynthesis; gluconeogenesis. Its pathway is carbohydrate degradation; glycolysis; D-glyceraldehyde 3-phosphate from glycerone phosphate: step 1/1. Its function is as follows. Involved in the gluconeogenesis. Catalyzes stereospecifically the conversion of dihydroxyacetone phosphate (DHAP) to D-glyceraldehyde-3-phosphate (G3P). This Prochlorococcus marinus subsp. pastoris (strain CCMP1986 / NIES-2087 / MED4) protein is Triosephosphate isomerase.